We begin with the raw amino-acid sequence, 285 residues long: Shikimate dehydrogenase (NADP(+)) (285 aa).

Shikimate contacts are provided by residues 22–24 (SMS) and Thr-69. Lys-73 acts as the Proton acceptor in catalysis. Asp-85 contacts NADP(+). Shikimate contacts are provided by Asn-94 and Asp-110. NADP(+) is bound by residues 136-140 (GAGGA), 160-165 (NRTVAR), and Met-225. Shikimate is bound at residue Tyr-227. Gly-248 serves as a coordination point for NADP(+).

This sequence belongs to the shikimate dehydrogenase family. Homodimer.

It catalyses the reaction shikimate + NADP(+) = 3-dehydroshikimate + NADPH + H(+). It functions in the pathway metabolic intermediate biosynthesis; chorismate biosynthesis; chorismate from D-erythrose 4-phosphate and phosphoenolpyruvate: step 4/7. In terms of biological role, involved in the biosynthesis of the chorismate, which leads to the biosynthesis of aromatic amino acids. Catalyzes the reversible NADPH linked reduction of 3-dehydroshikimate (DHSA) to yield shikimate (SA). In Caulobacter vibrioides (strain ATCC 19089 / CIP 103742 / CB 15) (Caulobacter crescentus), this protein is Shikimate dehydrogenase (NADP(+)).